Here is a 456-residue protein sequence, read N- to C-terminus: MTQQLVKKGQQISLKIKRLGINGEGIGYYKKLIIFVPGALPKEEVTATITNVTPKFAEGTLQSVKKAAKDRVVPPCPVYETCGGCQLQHLAYKAQLDFKKDLLKQALNKFKPANYQNYELRKTIGMDNPWNYRNKAQFQLRQIDGQVEAGLYQADSHQLVPIDNCLVQQPATTKVMNTLVDLLNDFQLPIYDERKNSGIFRTLMVRVGIQTGEVQVVFITQSQKFPQKEKMVRAINEQLPEVVSIMQNVQNKKTSLVMGDDTLHLWGKESIEEHINDVVFDLSPRAFFQLNPEQTEVLYNEGIKALDLQPNETVVDAYCGVGTIGLSLAKQAHQVRGMDTIPAAIDDARFNAKRLGVTNTHYAVGTAEDLLPKWFKEGFKPDAIVVDPPRTGLDRKLLTALLKQPPKKMVYISCNVSTLARDLVQLAKVYQVDYLQSVDMFPQTARCEVVVKLTRK.

Positions 5 to 63 (LVKKGQQISLKIKRLGINGEGIGYYKKLIIFVPGALPKEEVTATITNVTPKFAEGTLQS) constitute a TRAM domain. [4Fe-4S] cluster contacts are provided by cysteine 76, cysteine 82, cysteine 85, and cysteine 165. Glutamine 289, tyrosine 318, aspartate 339, and aspartate 387 together coordinate S-adenosyl-L-methionine. Catalysis depends on cysteine 414, which acts as the Nucleophile.

The protein belongs to the class I-like SAM-binding methyltransferase superfamily. RNA M5U methyltransferase family.

This is an uncharacterized protein from Enterococcus faecalis (strain ATCC 700802 / V583).